Here is a 274-residue protein sequence, read N- to C-terminus: Cytochrome b-c1 complex subunit Rieske, mitochondrial (274 aa).

The Mitochondrial matrix portion of the chain corresponds to 79–110 (SHTDVKVPDFSDYRRAEVLDSTKSSKESSEAR). A helical transmembrane segment spans residues 111 to 137 (KGFSYLVTATTTVGVAYAAKNVVSQFV). Residues 138–274 (SSMSASADVL…FTSDDVVVVG (137 aa)) are Mitochondrial intermembrane-facing. The Rieske domain maps to 187-272 (EAAVEVSQLR…YEFTSDDVVV (86 aa)). 5 residues coordinate [2Fe-2S] cluster: C217, H219, C236, H239, and S241. A disulfide bridge links C222 with C238.

It belongs to the Rieske iron-sulfur protein family. As to quaternary structure, component of the ubiquinol-cytochrome c oxidoreductase (cytochrome b-c1 complex, complex III, CIII), a multisubunit enzyme composed of 11 subunits. The complex is composed of 3 respiratory subunits cytochrome b, cytochrome c1 and Rieske protein UQCRFS1, 2 core protein subunits UQCRC1/QCR1 and UQCRC2/QCR2, and 6 low-molecular weight protein subunits UQCRH/QCR6, UQCRB/QCR7, UQCRQ/QCR8, UQCR10/QCR9, UQCR11/QCR10 and subunit 9, the cleavage product of Rieske protein UQCRFS1. The complex exists as an obligatory dimer and forms supercomplexes (SCs) in the inner mitochondrial membrane with NADH-ubiquinone oxidoreductase (complex I, CI) and cytochrome c oxidase (complex IV, CIV), resulting in different assemblies (supercomplex SCI(1)III(2)IV(1) and megacomplex MCI(2)III(2)IV(2)). Incorporation of the Rieske protein UQCRFS1 is the penultimate step in complex III assembly. Interacts with TTC19, which is involved in the clearance of UQCRFS1 fragments. In terms of assembly, component of the ubiquinol-cytochrome c oxidoreductase (cytochrome b-c1 complex, complex III, CIII). Subunit 9 corresponds to the mitochondrial targeting sequence (MTS) of Rieske protein UQCRFS1. It is retained after processing and incorporated inside complex III, where it remains bound to the complex and localizes between the 2 core subunits UQCRC1/QCR1 and UQCRC2/QCR2. [2Fe-2S] cluster serves as cofactor. Post-translationally, proteolytic processing is necessary for the correct insertion of UQCRFS1 in the complex III dimer. Several fragments are generated during UQCRFS1 insertion, most probably due to the endogenous matrix-processing peptidase (MPP) activity of the 2 core protein subunits UQCRC1/QCR1 and UQCRC2/QCR2, which are homologous to the 2 mitochondrial-processing peptidase (MPP) subunits beta-MPP and alpha-MPP respectively. The action of the protease is also necessary for the clearance of the UQCRFS1 fragments.

The protein resides in the mitochondrion inner membrane. It catalyses the reaction a quinol + 2 Fe(III)-[cytochrome c](out) = a quinone + 2 Fe(II)-[cytochrome c](out) + 2 H(+)(out). Component of the ubiquinol-cytochrome c oxidoreductase, a multisubunit transmembrane complex that is part of the mitochondrial electron transport chain which drives oxidative phosphorylation. The respiratory chain contains 3 multisubunit complexes succinate dehydrogenase (complex II, CII), ubiquinol-cytochrome c oxidoreductase (cytochrome b-c1 complex, complex III, CIII) and cytochrome c oxidase (complex IV, CIV), that cooperate to transfer electrons derived from NADH and succinate to molecular oxygen, creating an electrochemical gradient over the inner membrane that drives transmembrane transport and the ATP synthase. The cytochrome b-c1 complex catalyzes electron transfer from ubiquinol to cytochrome c, linking this redox reaction to translocation of protons across the mitochondrial inner membrane, with protons being carried across the membrane as hydrogens on the quinol. In the process called Q cycle, 2 protons are consumed from the matrix, 4 protons are released into the intermembrane space and 2 electrons are passed to cytochrome c. The Rieske protein is a catalytic core subunit containing a [2Fe-2S] iron-sulfur cluster. It cycles between 2 conformational states during catalysis to transfer electrons from the quinol bound in the Q(0) site in cytochrome b to cytochrome c1. Incorporation of UQCRFS1 is the penultimate step in complex III assembly. In terms of biological role, component of the ubiquinol-cytochrome c oxidoreductase (cytochrome b-c1 complex, complex III, CIII). UQCRFS1 undergoes proteolytic processing once it is incorporated in the complex III dimer. One of the fragments, called subunit 9, corresponds to its mitochondrial targeting sequence (MTS). The proteolytic processing is necessary for the correct insertion of UQCRFS1 in the complex III dimer, but the persistence of UQCRFS1-derived fragments may prevent newly imported UQCRFS1 to be processed and assembled into complex III and is detrimental for the complex III structure and function. In Mus musculus (Mouse), this protein is Cytochrome b-c1 complex subunit Rieske, mitochondrial.